The following is a 166-amino-acid chain: Regulatory protein RecX (166 aa).

This sequence belongs to the RecX family.

Its subcellular location is the cytoplasm. In terms of biological role, modulates RecA activity. In Salmonella arizonae (strain ATCC BAA-731 / CDC346-86 / RSK2980), this protein is Regulatory protein RecX.